The chain runs to 865 residues: Chitin synthase 3 (865 aa).

The segment at 1-59 (MASQYPGHQLDDIPSTNVYRPPPRHEDDEAEHALLHQNSAYQSQYDDPHSRPLTPGQES) is disordered. Basic and acidic residues predominate over residues 23–34 (PRHEDDEAEHAL). The span at 36–45 (HQNSAYQSQY) shows a compositional bias: polar residues. 3 N-linked (GlcNAc...) asparagine glycosylation sites follow: Asn-64, Asn-95, and Asn-538. 3 consecutive transmembrane segments (helical) span residues 565-585 (FFLHIQMIYNIVSVLLSWFSL), 620-640 (IINTILQYLYLAFLLLQFILA), and 650-670 (VAYIISFCLFGLIQLYVIVLS). N-linked (GlcNAc...) asparagine glycosylation is present at Asn-682. The next 3 membrane-spanning stretches (helical) occupy residues 707-727 (IVIIALAATFGLYFVASFLYM), 735-755 (SFAQYLLLMPSFINILMIYAF), and 837-857 (LVATWIFSNALLAVAITSDSL).

This sequence belongs to the chitin synthase family. Class III subfamily.

It localises to the cell membrane. The catalysed reaction is [(1-&gt;4)-N-acetyl-beta-D-glucosaminyl](n) + UDP-N-acetyl-alpha-D-glucosamine = [(1-&gt;4)-N-acetyl-beta-D-glucosaminyl](n+1) + UDP + H(+). In terms of biological role, polymerizes chitin, a structural polymer of the cell wall and septum, by transferring the sugar moiety of UDP-GlcNAc to the non-reducing end of the growing chitin polymer. Is not only stable at different pH, but is also able to tolerate a broad temperature range. With CHS2, plays an important role in virulence. This chain is Chitin synthase 3, found in Exophiala dermatitidis (strain ATCC 34100 / CBS 525.76 / NIH/UT8656) (Black yeast).